The sequence spans 336 residues: tRNA-cytidine(32) 2-sulfurtransferase (336 aa).

The tract at residues 1–34 (MNAPEILNGAATASPADATEATQTAARAKTPLTR) is disordered. Positions 10-22 (AATASPADATEAT) are enriched in low complexity. Residues 75–80 (SGGKDS) carry the PP-loop motif motif. Positions 150, 153, and 241 each coordinate [4Fe-4S] cluster.

The protein belongs to the TtcA family. As to quaternary structure, homodimer. Requires Mg(2+) as cofactor. It depends on [4Fe-4S] cluster as a cofactor.

It is found in the cytoplasm. The enzyme catalyses cytidine(32) in tRNA + S-sulfanyl-L-cysteinyl-[cysteine desulfurase] + AH2 + ATP = 2-thiocytidine(32) in tRNA + L-cysteinyl-[cysteine desulfurase] + A + AMP + diphosphate + H(+). The protein operates within tRNA modification. Functionally, catalyzes the ATP-dependent 2-thiolation of cytidine in position 32 of tRNA, to form 2-thiocytidine (s(2)C32). The sulfur atoms are provided by the cysteine/cysteine desulfurase (IscS) system. The sequence is that of tRNA-cytidine(32) 2-sulfurtransferase from Paraburkholderia phytofirmans (strain DSM 17436 / LMG 22146 / PsJN) (Burkholderia phytofirmans).